The chain runs to 751 residues: Protein WEAK CHLOROPLAST MOVEMENT UNDER BLUE LIGHT-like 3 (751 aa).

Ser113 carries the post-translational modification Phosphoserine. 2 coiled-coil regions span residues 165-558 (ERRK…ALQE) and 588-647 (QALE…KARD). Basic and acidic residues-rich tracts occupy residues 455 to 467 (RERQ…KQKE) and 625 to 689 (NREM…RNKE). Disordered regions lie at residues 455 to 479 (RERQ…DKDA) and 625 to 751 (NREM…HSHK). The span at 704 to 723 (GSSSNNTGGSTTTNNNNLTP) shows a compositional bias: low complexity.

It belongs to the WEB family.

The chain is Protein WEAK CHLOROPLAST MOVEMENT UNDER BLUE LIGHT-like 3 (WEL3) from Arabidopsis thaliana (Mouse-ear cress).